Consider the following 571-residue polypeptide: Cerebral cavernous malformations 2 protein-like (571 aa).

Disordered stretches follow at residues 164 to 193, 212 to 295, and 544 to 571; these read AGVDASPGGAGRDPGPPGGAPEKRRVGTAE, AEAR…PQDP, and LAPDDDDDDEDEPRGSRGGSDAAEDNYL. The span at 184–193 shows a compositional bias: basic and acidic residues; the sequence is PEKRRVGTAE. Residues 212 to 223 are compositionally biased toward gly residues; the sequence is AEARAGGGGGGS. The span at 237–251 shows a compositional bias: basic and acidic residues; it reads WERRQTFSGSWERRH. Residues 253–264 show a composition bias toward gly residues; the sequence is GGGGGGGAGKPG. Positions 286–295 are enriched in pro residues; that stretch reads GPNPLDPQDP. Residues 545-555 are compositionally biased toward acidic residues; that stretch reads APDDDDDDEDE.

Belongs to the CCM2 family.

The chain is Cerebral cavernous malformations 2 protein-like (CCM2L) from Homo sapiens (Human).